The sequence spans 233 residues: MRWLAYLAGCLIVGVVAMQVYFFLQIAAWQVVNPSSTTFMRAERWRLCGFNFWSCPVQRQWVRYDEISRNIKRAVIASEDADFVNHPGYELDAMLDAWERNKQRGRIVRGGSTITQQLAKNLFLSSEQNYLRKGQELAITWMLELWLDKQRIFEIYLNSVEWGEGVFGVEAAAQHYFHTSASKLSVGQAARLAAALPAPKCFDKKQYCANVHVNFRVKASIIARRMGAATLPD.

The helical transmembrane segment at leucine 4–leucine 24 threads the bilayer.

Belongs to the glycosyltransferase 51 family.

Its subcellular location is the cell inner membrane. The catalysed reaction is [GlcNAc-(1-&gt;4)-Mur2Ac(oyl-L-Ala-gamma-D-Glu-L-Lys-D-Ala-D-Ala)](n)-di-trans,octa-cis-undecaprenyl diphosphate + beta-D-GlcNAc-(1-&gt;4)-Mur2Ac(oyl-L-Ala-gamma-D-Glu-L-Lys-D-Ala-D-Ala)-di-trans,octa-cis-undecaprenyl diphosphate = [GlcNAc-(1-&gt;4)-Mur2Ac(oyl-L-Ala-gamma-D-Glu-L-Lys-D-Ala-D-Ala)](n+1)-di-trans,octa-cis-undecaprenyl diphosphate + di-trans,octa-cis-undecaprenyl diphosphate + H(+). It participates in cell wall biogenesis; peptidoglycan biosynthesis. Peptidoglycan polymerase that catalyzes glycan chain elongation from lipid-linked precursors. The sequence is that of Biosynthetic peptidoglycan transglycosylase from Cupriavidus metallidurans (strain ATCC 43123 / DSM 2839 / NBRC 102507 / CH34) (Ralstonia metallidurans).